Reading from the N-terminus, the 361-residue chain is Chorismate synthase (361 aa).

R48 and R54 together coordinate NADP(+). Residues 125 to 127 (RSS), 238 to 239 (NA), G278, 293 to 297 (KPTSS), and R319 contribute to the FMN site.

It belongs to the chorismate synthase family. As to quaternary structure, homotetramer. It depends on FMNH2 as a cofactor.

It carries out the reaction 5-O-(1-carboxyvinyl)-3-phosphoshikimate = chorismate + phosphate. It functions in the pathway metabolic intermediate biosynthesis; chorismate biosynthesis; chorismate from D-erythrose 4-phosphate and phosphoenolpyruvate: step 7/7. Catalyzes the anti-1,4-elimination of the C-3 phosphate and the C-6 proR hydrogen from 5-enolpyruvylshikimate-3-phosphate (EPSP) to yield chorismate, which is the branch point compound that serves as the starting substrate for the three terminal pathways of aromatic amino acid biosynthesis. This reaction introduces a second double bond into the aromatic ring system. In Escherichia coli O157:H7, this protein is Chorismate synthase.